The chain runs to 168 residues: Photosystem I assembly protein Ycf3 (168 aa).

3 TPR repeats span residues 35–68, 72–105, and 120–153; these read AFTY…EIDP, SYIL…NPFL, and GEQA…TPGN.

The protein belongs to the Ycf3 family.

It localises to the plastid. Its subcellular location is the chloroplast thylakoid membrane. In terms of biological role, essential for the assembly of the photosystem I (PSI) complex. May act as a chaperone-like factor to guide the assembly of the PSI subunits. This chain is Photosystem I assembly protein Ycf3, found in Chloranthus spicatus (Chulantree).